Consider the following 369-residue polypeptide: Chaperone protein DnaJ (369 aa).

The 67-residue stretch at 7–73 (DYYEILGVPR…QKRAMYDRFG (67 aa)) folds into the J domain. A CR-type zinc finger spans residues 143-225 (GAEIPVEYER…CGGSGRVLRK (83 aa)). Positions 156, 159, 173, 176, 199, 202, 213, and 216 each coordinate Zn(2+). CXXCXGXG motif repeat units follow at residues 156–163 (CPRCGGTG), 173–180 (CPSCGGTG), 199–206 (CERCGGTG), and 213–220 (CHECGGSG).

It belongs to the DnaJ family. In terms of assembly, homodimer. Zn(2+) serves as cofactor.

The protein resides in the cytoplasm. In terms of biological role, participates actively in the response to hyperosmotic and heat shock by preventing the aggregation of stress-denatured proteins and by disaggregating proteins, also in an autonomous, DnaK-independent fashion. Unfolded proteins bind initially to DnaJ; upon interaction with the DnaJ-bound protein, DnaK hydrolyzes its bound ATP, resulting in the formation of a stable complex. GrpE releases ADP from DnaK; ATP binding to DnaK triggers the release of the substrate protein, thus completing the reaction cycle. Several rounds of ATP-dependent interactions between DnaJ, DnaK and GrpE are required for fully efficient folding. Also involved, together with DnaK and GrpE, in the DNA replication of plasmids through activation of initiation proteins. The sequence is that of Chaperone protein DnaJ from Thermotoga sp. (strain RQ2).